The following is a 340-amino-acid chain: Putative cystathionine beta-lyase (340 aa).

Lys208 carries the post-translational modification N6-(pyridoxal phosphate)lysine.

This sequence belongs to the trans-sulfuration enzymes family. Pyridoxal 5'-phosphate is required as a cofactor.

It carries out the reaction L,L-cystathionine + H2O = L-homocysteine + pyruvate + NH4(+). The catalysed reaction is an S-substituted L-cysteine + H2O = a thiol + pyruvate + NH4(+). Its pathway is amino-acid biosynthesis; L-methionine biosynthesis via de novo pathway; L-homocysteine from L-cystathionine: step 1/1. This Saccharomyces cerevisiae (strain ATCC 204508 / S288c) (Baker's yeast) protein is Putative cystathionine beta-lyase (IRC7).